We begin with the raw amino-acid sequence, 617 residues long: Sodium-dependent noradrenaline transporter (617 aa).

The tract at residues methionine 1 to glutamine 23 is disordered. At methionine 1–lysine 62 the chain is on the cytoplasmic side. The segment covering proline 8–alanine 17 has biased composition (polar residues). The chain crosses the membrane as a helical span at residues isoleucine 63–lysine 88. The Na(+) site is built by glycine 71, alanine 73, and valine 74. Position 75 (aspartate 75) interacts with (R)-noradrenaline. Aspartate 75 lines the dopamine pocket. Asparagine 78 contributes to the Na(+) binding site. Residues tyrosine 87 and lysine 88 each contribute to the (R)-noradrenaline site. The Extracellular portion of the chain corresponds to asparagine 89–glycine 92. A helical membrane pass occupies residues alanine 93–leucine 116. Topologically, residues glycine 117–lysine 135 are cytoplasmic. Residues glycine 136–serine 166 traverse the membrane as a helical segment. Alanine 145 and glycine 149 together coordinate (R)-noradrenaline. Position 145 (alanine 145) interacts with dopamine. The Extracellular portion of the chain corresponds to phenylalanine 167–proline 233. The cysteines at positions 176 and 185 are disulfide-linked. 3 N-linked (GlcNAc...) asparagine glycosylation sites follow: asparagine 184, asparagine 192, and asparagine 198. Residues glutamine 234 to lysine 254 traverse the membrane as a helical segment. Residues glycine 255–lysine 257 lie on the Cytoplasmic side of the membrane. The chain crosses the membrane as a helical span at residues threonine 258–valine 282. The Extracellular segment spans residues threonine 283–threonine 306. A helical transmembrane segment spans residues valine 307–tyrosine 332. Phenylalanine 317 serves as a coordination point for (R)-noradrenaline. Dopamine is bound at residue phenylalanine 317. Serine 318 contributes to the Na(+) binding site. At asparagine 333–asparagine 338 the chain is on the cytoplasmic side. Residues cysteine 339–phenylalanine 362 traverse the membrane as a helical segment. Asparagine 350 contacts Na(+). The Extracellular segment spans residues serine 363–threonine 402. Glutamate 382 is a binding site for (R)-noradrenaline. Position 382 (glutamate 382) interacts with dopamine. A helical transmembrane segment spans residues phenylalanine 403–isoleucine 428. 2 residues coordinate Na(+): aspartate 418 and serine 419. Over threonine 429–lysine 443 the chain is Cytoplasmic. A helical membrane pass occupies residues leucine 444–glycine 464. Position 465 (glycine 465) is a topological domain, extracellular. A helical transmembrane segment spans residues isoleucine 466–valine 492. Topologically, residues serine 493–lysine 522 are cytoplasmic. The helical transmembrane segment at phenylalanine 523–tyrosine 545 threads the bilayer. At aspartate 546–tyrosine 548 the chain is on the extracellular side. Residues isoleucine 549–valine 569 form a helical membrane-spanning segment. Residues proline 570–isoleucine 617 are Cytoplasmic-facing.

This sequence belongs to the sodium:neurotransmitter symporter (SNF) (TC 2.A.22) family. SLC6A2 subfamily. As to quaternary structure, monomer. Can form homodimers in the cell membrane; homodimerization is mostly mediated by cholesterol and lipids, and regulates neurotransmitter transport activity. Interacts with PRKCABP. Palmitoylated; palmitoylation regulates protein levels and neurotransmitter transport.

The protein resides in the cell membrane. It localises to the cell projection. The protein localises to the axon. It is found in the synapse. Its subcellular location is the synaptosome. It carries out the reaction (R)-noradrenaline(out) + chloride(out) + Na(+)(out) = (R)-noradrenaline(in) + chloride(in) + Na(+)(in). The enzyme catalyses dopamine(out) + chloride(out) + Na(+)(out) = dopamine(in) + chloride(in) + Na(+)(in). It catalyses the reaction dopamine(out) + chloride(out) + 2 Na(+)(out) = dopamine(in) + chloride(in) + 2 Na(+)(in). With respect to regulation, inhibited by mazindol, desipramine, nomifensine and nortriptyline. Mediates sodium- and chloride-dependent transport of norepinephrine (also known as noradrenaline), the primary signaling neurotransmitter in the autonomic sympathetic nervous system. Is responsible for norepinephrine re-uptake and clearance from the synaptic cleft, thus playing a crucial role in norepinephrine inactivation and homeostasis. Can also mediate sodium- and chloride-dependent transport of dopamine. The chain is Sodium-dependent noradrenaline transporter from Homo sapiens (Human).